The following is a 551-amino-acid chain: Probable 4-coumarate--CoA ligase 2 (551 aa).

Residues S205, S206, G207, T208, T209, and K213 each contribute to the ATP site. (E)-4-coumaroyl-AMP contacts are provided by Y253 and T257. Position 274 (K274) interacts with CoA. The tract at residues 276-346 (EFVRFLDLIQ…RFKGKLIIKQ (71 aa)) is SBD1. (E)-4-coumaroyl-AMP contacts are provided by A323, Q346, G347, and T351. Q346, G347, T351, D430, and R445 together coordinate ATP. Residues 347-409 (GYGATELSPA…IKGPNVMLGY (63 aa)) are SBD2. (E)-4-coumaroyl-AMP is bound by residues K447 and K451. Residues K453 and G454 each coordinate CoA. Position 537 (K537) interacts with ATP.

It belongs to the ATP-dependent AMP-binding enzyme family. Mg(2+) serves as cofactor.

The enzyme catalyses (E)-4-coumarate + ATP + CoA = (E)-4-coumaroyl-CoA + AMP + diphosphate. The catalysed reaction is (E)-4-coumarate + ATP + H(+) = (E)-4-coumaroyl-AMP + diphosphate. It carries out the reaction (E)-4-coumaroyl-AMP + CoA = (E)-4-coumaroyl-CoA + AMP + H(+). It functions in the pathway phytoalexin biosynthesis; 3,4',5-trihydroxystilbene biosynthesis; 3,4',5-trihydroxystilbene from trans-4-coumarate: step 1/2. Functionally, carboxylate--CoA ligase that may use 4-coumarate as substrate. Follows a two-step reaction mechanism, wherein the carboxylate substrate first undergoes adenylation by ATP, followed by a thioesterification in the presence of CoA to yield the final CoA thioester. The polypeptide is Probable 4-coumarate--CoA ligase 2 (4cl2) (Dictyostelium discoideum (Social amoeba)).